Consider the following 245-residue polypeptide: Ribosomal RNA small subunit methyltransferase G (245 aa).

S-adenosyl-L-methionine is bound by residues Gly-85, Phe-90, 108 to 110, 136 to 137, and Arg-155; these read DST and AE.

This sequence belongs to the methyltransferase superfamily. RNA methyltransferase RsmG family.

It localises to the cytoplasm. Specifically methylates the N7 position of a guanine in 16S rRNA. The polypeptide is Ribosomal RNA small subunit methyltransferase G (Trichormus variabilis (strain ATCC 29413 / PCC 7937) (Anabaena variabilis)).